The following is a 294-amino-acid chain: UDP-3-O-acyl-N-acetylglucosamine deacetylase (294 aa).

3 residues coordinate Zn(2+): histidine 75, histidine 232, and aspartate 236. Histidine 259 functions as the Proton donor in the catalytic mechanism.

The protein belongs to the LpxC family. Requires Zn(2+) as cofactor.

It catalyses the reaction a UDP-3-O-[(3R)-3-hydroxyacyl]-N-acetyl-alpha-D-glucosamine + H2O = a UDP-3-O-[(3R)-3-hydroxyacyl]-alpha-D-glucosamine + acetate. It participates in glycolipid biosynthesis; lipid IV(A) biosynthesis; lipid IV(A) from (3R)-3-hydroxytetradecanoyl-[acyl-carrier-protein] and UDP-N-acetyl-alpha-D-glucosamine: step 2/6. Its function is as follows. Catalyzes the hydrolysis of UDP-3-O-myristoyl-N-acetylglucosamine to form UDP-3-O-myristoylglucosamine and acetate, the committed step in lipid A biosynthesis. The protein is UDP-3-O-acyl-N-acetylglucosamine deacetylase of Sulfurovum sp. (strain NBC37-1).